The sequence spans 176 residues: Prenylated Rab acceptor 1 (176 aa).

The residue at position 1 (Met-1) is an N-acetylmethionine. The SKL peroxisome targeting motif signature appears at 11–13; it reads SRF. Ser-18 carries the phosphoserine modification. A run of 2 helical transmembrane segments spans residues 84 to 104 and 129 to 149; these read LLTN…IVGI and VCVA…LWLI.

It belongs to the PRA1 family. Interacts with YIP1 and the Rab GTPases SEC4, YPT1, YPT6, YPT10, YPT11, YPT31, YPT32 and YPT52.

The protein resides in the golgi apparatus membrane. It is found in the peroxisome membrane. The sequence is that of Prenylated Rab acceptor 1 (YIP3) from Saccharomyces cerevisiae (strain ATCC 204508 / S288c) (Baker's yeast).